Reading from the N-terminus, the 210-residue chain is DNA replication complex GINS protein PSF3 (210 aa).

The protein belongs to the GINS3/PSF3 family. Component of the GINS complex which is a heterotetramer of gins1/psf1, gins2/psf2, gins3/psf3 and gins4/sld5. Component of the CMG helicase complex, composed of the mcm2-7 complex, the GINS complex and cdc45.

It localises to the nucleus. Its subcellular location is the chromosome. Its function is as follows. Required for correct functioning of the GINS complex, a complex that plays an essential role in the initiation of DNA replication, and progression of DNA replication forks. GINS complex is a core component of CDC45-MCM-GINS (CMG) helicase, the molecular machine that unwinds template DNA during replication, and around which the replisome is built. In Xenopus laevis (African clawed frog), this protein is DNA replication complex GINS protein PSF3.